A 119-amino-acid polypeptide reads, in one-letter code: Flagellar transcriptional regulator FlhD (119 aa).

This sequence belongs to the FlhD family. In terms of assembly, homodimer; disulfide-linked. Forms a heterohexamer composed of two FlhC and four FlhD subunits. Each FlhC binds a FlhD dimer, forming a heterotrimer, and a hexamer assembles by dimerization of two heterotrimers.

It is found in the cytoplasm. Functionally, functions in complex with FlhC as a master transcriptional regulator that regulates transcription of several flagellar and non-flagellar operons by binding to their promoter region. Activates expression of class 2 flagellar genes, including fliA, which is a flagellum-specific sigma factor that turns on the class 3 genes. Also regulates genes whose products function in a variety of physiological pathways. The polypeptide is Flagellar transcriptional regulator FlhD (Escherichia fergusonii (strain ATCC 35469 / DSM 13698 / CCUG 18766 / IAM 14443 / JCM 21226 / LMG 7866 / NBRC 102419 / NCTC 12128 / CDC 0568-73)).